The sequence spans 304 residues: Acetyl-coenzyme A carboxylase carboxyl transferase subunit beta (304 aa).

The CoA carboxyltransferase N-terminal domain maps to 23 to 292 (VWTKCDSCGQ…PNPDAPREGV (270 aa)). Residues Cys27, Cys30, Cys46, and Cys49 each coordinate Zn(2+). The C4-type zinc finger occupies 27–49 (CDSCGQVLYRAELERNLEVCPKC). A disordered region spans residues 284-304 (NPDAPREGVVVPPAPGQESEA).

The protein belongs to the AccD/PCCB family. As to quaternary structure, acetyl-CoA carboxylase is a heterohexamer composed of biotin carboxyl carrier protein (AccB), biotin carboxylase (AccC) and two subunits each of ACCase subunit alpha (AccA) and ACCase subunit beta (AccD). Requires Zn(2+) as cofactor.

It localises to the cytoplasm. The catalysed reaction is N(6)-carboxybiotinyl-L-lysyl-[protein] + acetyl-CoA = N(6)-biotinyl-L-lysyl-[protein] + malonyl-CoA. Its pathway is lipid metabolism; malonyl-CoA biosynthesis; malonyl-CoA from acetyl-CoA: step 1/1. Component of the acetyl coenzyme A carboxylase (ACC) complex. Biotin carboxylase (BC) catalyzes the carboxylation of biotin on its carrier protein (BCCP) and then the CO(2) group is transferred by the transcarboxylase to acetyl-CoA to form malonyl-CoA. The chain is Acetyl-coenzyme A carboxylase carboxyl transferase subunit beta from Salmonella arizonae (strain ATCC BAA-731 / CDC346-86 / RSK2980).